A 496-amino-acid chain; its full sequence is Autophagy-related protein 21 (496 aa).

The interval 41 to 86 is disordered; it reads SKKKTSNNNGSASNSESRNNEESILITNGSRDRTDAEEEEDNEDNA. Positions 46 to 57 are enriched in low complexity; the sequence is SNNNGSASNSES. A compositionally biased stretch (acidic residues) spans 75–84; it reads DAEEEEDNED. At Thr-213 the chain carries Phosphothreonine. Phosphoserine is present on Ser-237. WD repeat units lie at residues 294 to 334, 346 to 385, and 448 to 488; these read VHKG…DYMS, TRLC…NSLP, and VNES…GECV. Positions 342-346 match the L/FRRG motif motif; it reads FRRGT.

It belongs to the WD repeat PROPPIN family.

Its subcellular location is the cytoplasm. The protein localises to the vacuole. Its function is as follows. Required for cytoplasm to vacuole transport (Cvt) vesicles formation and mitophagy. Involved in binding of phosphatidylethanolamine to ATG8 and in recruitment of ATG8 and ATG5 to the pre-autophagosomal structure. Protects ATG8 from ARG4-mediated cleavage. Essential for maturation of proaminopeptidase I. The polypeptide is Autophagy-related protein 21 (ATG21) (Saccharomyces cerevisiae (strain ATCC 204508 / S288c) (Baker's yeast)).